Consider the following 329-residue polypeptide: Methionyl-tRNA formyltransferase (329 aa).

Position 112-115 (112-115 (SILP)) interacts with (6S)-5,6,7,8-tetrahydrofolate.

It belongs to the Fmt family.

It catalyses the reaction L-methionyl-tRNA(fMet) + (6R)-10-formyltetrahydrofolate = N-formyl-L-methionyl-tRNA(fMet) + (6S)-5,6,7,8-tetrahydrofolate + H(+). Functionally, attaches a formyl group to the free amino group of methionyl-tRNA(fMet). The formyl group appears to play a dual role in the initiator identity of N-formylmethionyl-tRNA by promoting its recognition by IF2 and preventing the misappropriation of this tRNA by the elongation apparatus. The polypeptide is Methionyl-tRNA formyltransferase (Shewanella sediminis (strain HAW-EB3)).